The primary structure comprises 157 residues: Thioredoxin-T (157 aa).

A Thioredoxin domain is found at 2-107 (VYPVRNKDDL…LAKLMEKHAG (106 aa)). Cys32 and Cys35 are disulfide-bonded. The interval 132–157 (ESSESDNDNNNVNEVSAHDENAVLEH) is disordered. Positions 147–157 (SAHDENAVLEH) are enriched in basic and acidic residues.

This sequence belongs to the thioredoxin family. As to expression, testis specific. Not expressed in the embryo. Becomes progressively more strongly expressed during larval and pupal development. In testis, it is strongly expressed in young spermatocytes, and postmeiotic spermatid stages, then expression decreases at the nuclear elongation stage. Strongly expressed in the waste bag, in which material no longer needed for the mature sperm is eliminated. Not expressed in the stem cells and spermatogonial cells.

The protein resides in the nucleus. Its subcellular location is the chromosome. Functionally, probably participates in various redox reactions through the reversible oxidation of its active center dithiol to a disulfide and catalyzes dithiol-disulfide exchange reactions. Its tissue specificity suggests a regulatory role in the germline. This is Thioredoxin-T (TrxT) from Drosophila melanogaster (Fruit fly).